The sequence spans 690 residues: Proprotein convertase subtilisin/kexin type 9 (690 aa).

The signal sequence occupies residues Met1–Ala28. Positions Gln29–Gln150 are excised as a propeptide. A Sulfotyrosine modification is found at Tyr36. Ser45 carries the post-translational modification Phosphoserine. An Inhibitor I9 domain is found at Thr75 to Val147. The 307-residue stretch at Pro153 to Trp459 folds into the Peptidase S8 domain. Catalysis depends on charge relay system residues Asp184 and His224. Disulfide bonds link Cys221–Cys253 and Cys321–Cys356. Residue Ser384 is the Charge relay system of the active site. The interval Gly448 to Gln690 is C-terminal domain. 3 disulfides stabilise this stretch: Cys455–Cys525, Cys475–Cys524, and Cys484–Cys507. N-linked (GlcNAc...) asparagine glycosylation occurs at Asn531. Cystine bridges form between Cys532–Cys599, Cys550–Cys598, Cys560–Cys586, Cys606–Cys677, Cys624–Cys676, and Cys633–Cys652. Phosphoserine is present on Ser686.

The protein belongs to the peptidase S8 family. Monomer. Can self-associate to form dimers and higher multimers which may have increased LDLR degrading activity. The precursor protein but not the mature protein may form multimers. Interacts with APOB, VLDLR, LRP8/APOER2 and BACE1. The full-length immature form (pro-PCSK9) interacts with SCNN1A, SCNN1B and SCNN1G. The pro-PCSK9 form (via C-terminal domain) interacts with LDLR. Interacts (via the C-terminal domain) with ANXA2 (via repeat Annexin 1); the interaction inhibits the degradation of LDLR. Ca(2+) serves as cofactor. Post-translationally, cleavage by furin and PCSK5 generates a truncated inactive protein that is unable to induce LDLR degradation. Undergoes autocatalytic cleavage in the endoplasmic reticulum to release the propeptide from the N-terminus and the cleavage of the propeptide is strictly required for its maturation and activation. The cleaved propeptide however remains associated with the catalytic domain through non-covalent interactions, preventing potential substrates from accessing its active site. As a result, it is secreted from cells as a propeptide-containing, enzymatically inactive protein. In terms of processing, phosphorylation protects the propeptide against proteolysis.

The protein localises to the cytoplasm. It localises to the secreted. Its subcellular location is the endosome. It is found in the lysosome. The protein resides in the cell surface. The protein localises to the endoplasmic reticulum. It localises to the golgi apparatus. With respect to regulation, its proteolytic activity is autoinhibited by the non-covalent binding of the propeptide to the catalytic domain. Inhibited by EGTA. Its function is as follows. Crucial player in the regulation of plasma cholesterol homeostasis. Binds to low-density lipid receptor family members: low density lipoprotein receptor (LDLR), very low density lipoprotein receptor (VLDLR), apolipoprotein E receptor (LRP1/APOER) and apolipoprotein receptor 2 (LRP8/APOER2), and promotes their degradation in intracellular acidic compartments. Acts via a non-proteolytic mechanism to enhance the degradation of the hepatic LDLR through a clathrin LDLRAP1/ARH-mediated pathway. May prevent the recycling of LDLR from endosomes to the cell surface or direct it to lysosomes for degradation. Can induce ubiquitination of LDLR leading to its subsequent degradation. Inhibits intracellular degradation of APOB via the autophagosome/lysosome pathway in a LDLR-independent manner. Involved in the disposal of non-acetylated intermediates of BACE1 in the early secretory pathway. Inhibits epithelial Na(+) channel (ENaC)-mediated Na(+) absorption by reducing ENaC surface expression primarily by increasing its proteasomal degradation. Regulates neuronal apoptosis via modulation of LRP8/APOER2 levels and related anti-apoptotic signaling pathways. The protein is Proprotein convertase subtilisin/kexin type 9 (PCSK9) of Lagothrix lagotricha (Brown woolly monkey).